The following is a 465-amino-acid chain: Na(+)-translocating NADH-quinone reductase subunit A (465 aa).

It belongs to the NqrA family. As to quaternary structure, composed of six subunits; NqrA, NqrB, NqrC, NqrD, NqrE and NqrF.

It carries out the reaction a ubiquinone + n Na(+)(in) + NADH + H(+) = a ubiquinol + n Na(+)(out) + NAD(+). In terms of biological role, NQR complex catalyzes the reduction of ubiquinone-1 to ubiquinol by two successive reactions, coupled with the transport of Na(+) ions from the cytoplasm to the periplasm. NqrA to NqrE are probably involved in the second step, the conversion of ubisemiquinone to ubiquinol. This is Na(+)-translocating NADH-quinone reductase subunit A from Chlamydia trachomatis serovar A (strain ATCC VR-571B / DSM 19440 / HAR-13).